The chain runs to 327 residues: uncharacterized protein (327 aa).

The signal sequence occupies residues 1–24; the sequence is MKQPGFIRLATLALLSTLSFFSHG.

This is an uncharacterized protein from Salmonella typhimurium (strain LT2 / SGSC1412 / ATCC 700720).